We begin with the raw amino-acid sequence, 289 residues long: Serine/threonine-protein phosphatase Pgam5, mitochondrial (289 aa).

It belongs to the phosphoglycerate mutase family. BPG-dependent PGAM subfamily. In terms of assembly, interacts with Pk92B/ASK1.

Its subcellular location is the mitochondrion outer membrane. The catalysed reaction is O-phospho-L-seryl-[protein] + H2O = L-seryl-[protein] + phosphate. The enzyme catalyses O-phospho-L-threonyl-[protein] + H2O = L-threonyl-[protein] + phosphate. Displays phosphatase activity for serine/threonine residues, and dephosphorylates and activates Pk92B kinase. Has apparently no phosphoglycerate mutase activity. This is Serine/threonine-protein phosphatase Pgam5, mitochondrial from Drosophila yakuba (Fruit fly).